The sequence spans 313 residues: Homeobox protein CDX-2 (313 aa).

Position 60 is a phosphoserine (Ser60). The segment at 113-153 (HAHHHPHHHPHHPAAAPSCASGLLQTLNPGPPGPAATGAAE) is disordered. The segment covering 114-124 (AHHHPHHHPHH) has biased composition (basic residues). The interaction with DNA stretch occupies residues 185-215 (KDKYRVVYTDHQRLELEKEFHYSRYITIRRK). The homeobox DNA-binding region spans 185 to 244 (KDKYRVVYTDHQRLELEKEFHYSRYITIRRKAELAATLGLSERQVKIWFQNRRAKERKIN). The tract at residues 227 to 241 (RQVKIWFQNRRAKER) is interaction with 5-mCpG DNA. Residues 242 to 313 (KINKKKLQQQ…GGVLNPTVTQ (72 aa)) form a disordered region. 2 stretches are compositionally biased toward low complexity: residues 249–261 (QQQQ…QQLA) and 271–300 (QPGS…PGVL). At Ser283 the chain carries Phosphoserine. The 4S motif; modulates transactivation activity and protein stability signature appears at 283-295 (SPVSSLQGSVPGS).

The protein belongs to the Caudal homeobox family. Can bind DNA as a monomer or homodimer. Ubiquitinated, leading to its degradation by the proteasome. In terms of processing, phosphorylation at Ser-60 reduces transactivation capacity. Phosphorylation at Ser-283 reduces transactivation capacity and also increases ubiquitin-dependent proteasome degradation. In terms of tissue distribution, expressed in the intestine.

The protein localises to the nucleus. Transcription factor which regulates the transcription of multiple genes expressed in the intestinal epithelium. Binds to the promoter of the intestinal sucrase-isomaltase SI and activates SI transcription. Binds to the DNA sequence 5'-ATAAAAACTTAT-3' in the promoter region of VDR and activates VDR transcription. Binds to and activates transcription of LPH. Activates transcription of CLDN2 and intestinal mucin MUC2. Binds to the 5'-AATTTTTTACAACACCT-3' DNA sequence in the promoter region of CA1 and activates CA1 transcription. Important in broad range of functions from early differentiation to maintenance of the intestinal epithelial lining of both the small and large intestine. Binds preferentially to methylated DNA. This Mesocricetus auratus (Golden hamster) protein is Homeobox protein CDX-2 (CDX2).